The chain runs to 590 residues: MAVDSNLSSPLGPPACEKDAKALRFIEEMTRNADTVQENLLAEILARNADTEYLRRFNLCGATDRDTFKTKIPVITYEDLQPEIQRIADGDRSPILSAHPISEFLTSSGTSAGERKLMPTIKEELDRRQLLYSLLMPVMNLYVPGLDKGKGMYFLFVKSETKTPGGLPARPVLTSYYKSEHFRSRPYDPYNVYTSPNEAILCPDSFQSMYTQMLCGLLDRLSVLRVGAVFASGLLRAIRFLQLHWSRFAHDIELGCLDSEITDPSIRQCMSGILKPDPVLAEFIRRECKSDNWEKIITRIWPNTKYLDVIVTGAMAQYIPTLEYYSGGLPMACTMYASSECYFGLNLNPMSKPSEVSYTIMPNMAYFEFIPLGGTKAVELVDVNIGKEYELVVTTYAGLCRYRVGDILRVTGFHNSAPQFHFVRRKNVLLSIDSDKTDESELQKAVENASSILHEECGSRVAEYTSYADTSTIPGHYVLYWELLVRDGARQPSHETLTRCCLGMEESLNSVYRQSRVADNSVGPLEIRVVRNGTFEELMDYAISRGASINQYKVPRCVNFTPIVELLDSRVVSAHFSPSLPHWTPERRRR.

This sequence belongs to the IAA-amido conjugating enzyme family.

In terms of biological role, catalyzes the synthesis of indole-3-acetic acid (IAA)-amino acid conjugates, providing a mechanism for the plant to cope with the presence of excess auxin. The sequence is that of Probable indole-3-acetic acid-amido synthetase GH3.1 (GH3.1) from Arabidopsis thaliana (Mouse-ear cress).